Reading from the N-terminus, the 250-residue chain is Electron transfer flavoprotein subunit beta (250 aa).

Belongs to the ETF beta-subunit/FixA family. As to quaternary structure, heterodimer of an alpha and a beta subunit. Requires FAD as cofactor. AMP serves as cofactor.

It localises to the mitochondrion matrix. Functionally, the electron transfer flavoprotein serves as a specific electron acceptor for several dehydrogenases, including five acyl-CoA dehydrogenases, glutaryl-CoA and sarcosine dehydrogenase. It transfers the electrons to the main mitochondrial respiratory chain via ETF-ubiquinone oxidoreductase (ETF dehydrogenase). This chain is Electron transfer flavoprotein subunit beta (etfb), found in Dictyostelium discoideum (Social amoeba).